A 231-amino-acid chain; its full sequence is uncharacterized protein (231 aa).

6 helical membrane-spanning segments follow: residues 4-24 (YIIY…LQIS), 29-49 (SMIF…LVIG), 58-78 (AGNA…ALPL), 95-115 (TVVI…LLLG), 147-167 (VTAV…YLVL), and 211-231 (LCGI…YFFV).

It belongs to the YohK (E.coli)/YwbG (IPA-22R) (B.subtilis) family.

The protein resides in the cell membrane. This is an uncharacterized protein from Haemophilus influenzae (strain ATCC 51907 / DSM 11121 / KW20 / Rd).